The sequence spans 358 residues: Alanine racemase (358 aa).

Lysine 35 acts as the Proton acceptor; specific for D-alanine in catalysis. Lysine 35 is subject to N6-(pyridoxal phosphate)lysine. Arginine 130 is a binding site for substrate. The Proton acceptor; specific for L-alanine role is filled by tyrosine 255. Methionine 303 contributes to the substrate binding site.

Belongs to the alanine racemase family. It depends on pyridoxal 5'-phosphate as a cofactor.

The catalysed reaction is L-alanine = D-alanine. Its pathway is amino-acid biosynthesis; D-alanine biosynthesis; D-alanine from L-alanine: step 1/1. Its function is as follows. Catalyzes the interconversion of L-alanine and D-alanine. May also act on other amino acids. The protein is Alanine racemase (alr) of Shewanella sp. (strain MR-4).